Here is a 364-residue protein sequence, read N- to C-terminus: Leucine-rich repeat-containing protein 19 (364 aa).

Residues 1-20 form the signal peptide; that stretch reads MKVTRFMFWLFSMLLPSVKS. Residues 21 to 264 are Extracellular-facing; it reads QASETEVPCN…SEHEPLGKSW (244 aa). N-linked (GlcNAc...) asparagine glycans are attached at residues Asn30, Asn35, Asn46, and Asn88. LRR repeat units lie at residues 44–69, 70–93, 94–117, 118–141, 143–163, and 164–190; these read STNVTILDLSYNRITLNAADSRVLQM, YSLLTELYLMENNIIALYNSSFRN, LLNLEILNICGNSISVIQQGSFVG, LNELKQLFLCQNKILQLNPDTFVP, NNLKVLNLQGNLIRLFDAPQL, and PHLEILTLDGNPWNCTCGLLELHNWLN. The region spanning 174–225 is the LRRCT domain; sequence NPWNCTCGLLELHNWLNTSNVTLENENMTMCSYPDELKHDSIKSAPFTTECH. N-linked (GlcNAc...) asparagine glycans are attached at residues Asn177, Asn190, Asn193, Asn200, Asn241, Asn245, and Asn250. Residues 265 to 285 form a helical membrane-spanning segment; sequence AFLVGVVATVLLTSLLIFIAI. The Cytoplasmic segment spans residues 286–364; that stretch reads KCPVWYNILL…IDINEVHEEK (79 aa).

Interacts with TRAF2 and TRAF6. Strongly expressed in kidney, also expressed in spleen, intestine and colon. Highly expressed in epithelial cells. In kidney, mainly expressed in renal collecting duct epithelial cells.

It is found in the membrane. With respect to regulation, activated by TLR ligands such as LPS, bacterial DNA and peptidoglycan. Pathogen-recognition receptor which mediates the activation of TRAF2- and TRAF6 NF-kappa-B signaling pathways and induces the expression of pro-inflammatory cytokines. In kidney, prevents infection by uropathogenic bacteria by inducing the production of cytokines, chemokines and antimicrobial substances. In gut, involved in host-microbiota interactions, plays a critical role in promoting the recruitment of immune cells and intestinal inflammation. This Mus musculus (Mouse) protein is Leucine-rich repeat-containing protein 19.